A 531-amino-acid polypeptide reads, in one-letter code: Peptide chain release factor 3 (531 aa).

The tr-type G domain occupies 10–278; the sequence is RRRRTFAIIS…SLIDWAPAPK (269 aa). Residues 19 to 26, 87 to 91, and 141 to 144 each bind GTP; these read SHPDAGKT, DTPGH, and NKYD.

This sequence belongs to the TRAFAC class translation factor GTPase superfamily. Classic translation factor GTPase family. PrfC subfamily.

Its subcellular location is the cytoplasm. In terms of biological role, increases the formation of ribosomal termination complexes and stimulates activities of RF-1 and RF-2. It binds guanine nucleotides and has strong preference for UGA stop codons. It may interact directly with the ribosome. The stimulation of RF-1 and RF-2 is significantly reduced by GTP and GDP, but not by GMP. The sequence is that of Peptide chain release factor 3 from Neisseria meningitidis serogroup B (strain ATCC BAA-335 / MC58).